The sequence spans 497 residues: Maintenance of mitochondrial morphology protein 1 (497 aa).

The Lumenal segment spans residues 1–28 (MSSVLNPSSPHSWDLCCSSSSNRSYHRP). The helical transmembrane segment at 29–55 (THPIVGLLVGQLSVVLLIGAFIKFFIF) threads the bilayer. At 56-497 (GEAPPSPSRS…GSLPDAVPIT (442 aa)) the chain is on the cytoplasmic side. 4 disordered regions span residues 60 to 107 (PSPS…SSST), 284 to 330 (ESST…STTG), 402 to 421 (TGVRGQEEQPDVSSSDAAGV), and 437 to 497 (EMLH…VPIT). Residues 66-77 (QTHRTSQHKRSY) show a composition bias toward basic residues. Residues 81–94 (GARDLSPRTLKEKP) are compositionally biased toward basic and acidic residues. Polar residues-rich tracts occupy residues 95–107 (SSNVLRPVPSSST), 284–302 (ESSTNLTPTSSNIDTNLRS), and 311–330 (PQESSTTDEGSQGGATSTTG). The region spanning 140 to 393 (QPESLDWFNV…EPRVQVVALP (254 aa)) is the SMP-LTD domain. A compositionally biased stretch (low complexity) spans 412–421 (DVSSSDAAGV). A compositionally biased stretch (basic and acidic residues) spans 440–451 (HAAREVDAEGLR). Over residues 462-473 (GSSSKYAQQNQS) the composition is skewed to polar residues. The span at 474–484 (SRERGRADDPF) shows a compositional bias: basic and acidic residues.

This sequence belongs to the MMM1 family. As to quaternary structure, homodimer. Component of the ER-mitochondria encounter structure (ERMES) or MDM complex, composed of MMM1, MDM10, MDM12 and MDM34. An MMM1 homodimer associates with one molecule of MDM12 on each side in a pairwise head-to-tail manner, and the SMP-LTD domains of MMM1 and MDM12 generate a continuous hydrophobic tunnel for phospholipid trafficking.

It localises to the endoplasmic reticulum membrane. In terms of biological role, component of the ERMES/MDM complex, which serves as a molecular tether to connect the endoplasmic reticulum (ER) and mitochondria. Components of this complex are involved in the control of mitochondrial shape and protein biogenesis, and function in nonvesicular lipid trafficking between the ER and mitochondria. The MDM12-MMM1 subcomplex functions in the major beta-barrel assembly pathway that is responsible for biogenesis of all outer membrane beta-barrel proteins, and acts in a late step after the SAM complex. The MDM10-MDM12-MMM1 subcomplex further acts in the TOM40-specific pathway after the action of the MDM12-MMM1 complex. Essential for establishing and maintaining the structure of mitochondria and maintenance of mtDNA nucleoids. The chain is Maintenance of mitochondrial morphology protein 1 from Uncinocarpus reesii (strain UAMH 1704).